A 191-amino-acid polypeptide reads, in one-letter code: Adenylate kinase (191 aa).

11 to 16 is an ATP binding site; the sequence is GAGKGT. The segment at 31-60 is NMP; it reads STGDILRSNVAERSPLGIKAKDYMDKGDLV. AMP contacts are provided by residues T32, R37, 58–60, 86–89, and Q93; these read DLV and GFPR. The segment at 132-138 is LID; sequence SRKREDD. ATP is bound at residue R133. Positions 135 and 146 each coordinate AMP. N174 contacts ATP.

It belongs to the adenylate kinase family. As to quaternary structure, monomer.

It localises to the cytoplasm. The catalysed reaction is AMP + ATP = 2 ADP. The protein operates within purine metabolism; AMP biosynthesis via salvage pathway; AMP from ADP: step 1/1. Its function is as follows. Catalyzes the reversible transfer of the terminal phosphate group between ATP and AMP. Plays an important role in cellular energy homeostasis and in adenine nucleotide metabolism. The protein is Adenylate kinase of Trichodesmium erythraeum (strain IMS101).